Reading from the N-terminus, the 968-residue chain is RNA polymerase-associated protein RapA (968 aa).

Residues 164–334 (EVGQRHAPRV…FARLRLLDPN (171 aa)) enclose the Helicase ATP-binding domain. Position 177-184 (177-184 (DEVGLGKT)) interacts with ATP. The DEAH box motif lies at 280–283 (DEAH). Residues 493–644 (WLVDFLLDLR…TCPTGRALYD (152 aa)) enclose the Helicase C-terminal domain.

The protein belongs to the SNF2/RAD54 helicase family. RapA subfamily. In terms of assembly, interacts with the RNAP. Has a higher affinity for the core RNAP than for the holoenzyme. Its ATPase activity is stimulated by binding to RNAP.

Transcription regulator that activates transcription by stimulating RNA polymerase (RNAP) recycling in case of stress conditions such as supercoiled DNA or high salt concentrations. Probably acts by releasing the RNAP, when it is trapped or immobilized on tightly supercoiled DNA. Does not activate transcription on linear DNA. Probably not involved in DNA repair. This is RNA polymerase-associated protein RapA from Sodalis glossinidius (strain morsitans).